The sequence spans 475 residues: RNA pseudouridine synthase 3, mitochondrial (475 aa).

The transit peptide at 1–15 (MLCRRRRVGAAVRWL) directs the protein to the mitochondrion. Residues 40–74 (RLGKPKPGPRPRQLLSLPPFPGGGDGDPLPGRKAA) form a disordered region. In terms of domain architecture, S4 RNA-binding spans 90 to 160 (ADVPQEVVQA…GEIKKRYETI (71 aa)). The active site involves Asp230.

Belongs to the pseudouridine synthase RluA family.

Its subcellular location is the mitochondrion. The enzyme catalyses a uridine in RNA = a pseudouridine in RNA. The chain is RNA pseudouridine synthase 3, mitochondrial from Oryza sativa subsp. japonica (Rice).